A 412-amino-acid chain; its full sequence is Adenylosuccinate synthetase (412 aa).

Residues 12–18 and 40–42 each bind GTP; these read GDEGKGK and GHE. Asp13 acts as the Proton acceptor in catalysis. Residues Asp13 and Gly40 each contribute to the Mg(2+) site. Residues 13–16, 38–41, Arg134, Asn212, Thr227, and Arg291 each bind IMP; these read DEGK and NAGH. His41 serves as the catalytic Proton donor. Residue 287 to 293 coordinates substrate; that stretch reads TSTGRRR. GTP contacts are provided by residues Arg293, 318 to 320, and 400 to 402; these read KLD and GTG.

It belongs to the adenylosuccinate synthetase family. As to quaternary structure, homodimer. It depends on Mg(2+) as a cofactor.

It localises to the cytoplasm. The enzyme catalyses IMP + L-aspartate + GTP = N(6)-(1,2-dicarboxyethyl)-AMP + GDP + phosphate + 2 H(+). It participates in purine metabolism; AMP biosynthesis via de novo pathway; AMP from IMP: step 1/2. Plays an important role in the de novo pathway and in the salvage pathway of purine nucleotide biosynthesis. Catalyzes the first committed step in the biosynthesis of AMP from IMP. This Fusarium vanettenii (strain ATCC MYA-4622 / CBS 123669 / FGSC 9596 / NRRL 45880 / 77-13-4) (Fusarium solani subsp. pisi) protein is Adenylosuccinate synthetase.